The chain runs to 336 residues: Acetyl-coenzyme A carboxylase carboxyl transferase subunit beta (336 aa).

A CoA carboxyltransferase N-terminal domain is found at 27 to 297; it reads LWTKCESCQG…VAPAPAPAAT (271 aa). The Zn(2+) site is built by C31, C34, C50, and C53. The C4-type zinc-finger motif lies at 31–53; that stretch reads CESCQGILYRPDLERNLEVCPKC. The tract at residues 287–336 is disordered; it reads SVAPAPAPAATVDPEPESAEPEAPAEEAGPAGAAGDQAGESQDEGDPRNA. A compositionally biased stretch (acidic residues) spans 300–311; sequence PEPESAEPEAPA. Residues 312-326 are compositionally biased toward low complexity; sequence EEAGPAGAAGDQAGE.

Belongs to the AccD/PCCB family. In terms of assembly, acetyl-CoA carboxylase is a heterohexamer composed of biotin carboxyl carrier protein (AccB), biotin carboxylase (AccC) and two subunits each of ACCase subunit alpha (AccA) and ACCase subunit beta (AccD). Zn(2+) is required as a cofactor.

The protein localises to the cytoplasm. It carries out the reaction N(6)-carboxybiotinyl-L-lysyl-[protein] + acetyl-CoA = N(6)-biotinyl-L-lysyl-[protein] + malonyl-CoA. It functions in the pathway lipid metabolism; malonyl-CoA biosynthesis; malonyl-CoA from acetyl-CoA: step 1/1. Its function is as follows. Component of the acetyl coenzyme A carboxylase (ACC) complex. Biotin carboxylase (BC) catalyzes the carboxylation of biotin on its carrier protein (BCCP) and then the CO(2) group is transferred by the transcarboxylase to acetyl-CoA to form malonyl-CoA. The sequence is that of Acetyl-coenzyme A carboxylase carboxyl transferase subunit beta from Halorhodospira halophila (strain DSM 244 / SL1) (Ectothiorhodospira halophila (strain DSM 244 / SL1)).